A 111-amino-acid polypeptide reads, in one-letter code: Resistin-like gamma (111 aa).

The signal sequence occupies residues 1-23 (MKTAICSLLICIFLLQLMVPVNT). Cystine bridges form between Cys-55/Cys-108, Cys-67/Cys-107, Cys-76/Cys-93, Cys-78/Cys-95, and Cys-82/Cys-97.

The protein belongs to the resistin/FIZZ family. In terms of assembly, homodimer. Heterodimer with RETNLB. As to expression, highly expressed in bone marrow, spleen and white blood cells. Also detected at low levels in thymus, lung, trachea, white adipose tissue, nasal respiratory epithelium, colon, small intestine, kidney, liver, and heart.

The protein localises to the secreted. In terms of biological role, probable hormone. Promotes chemotaxis in myeloid cells. The sequence is that of Resistin-like gamma from Rattus norvegicus (Rat).